A 447-amino-acid polypeptide reads, in one-letter code: Argininosuccinate synthase (447 aa).

Residues 17–25 and Ala-43 contribute to the ATP site; that span reads AFSGGLDTS. Residue Tyr-99 coordinates L-citrulline. Positions 129 and 131 each coordinate ATP. The L-aspartate site is built by Thr-131, Asn-135, and Asp-136. Asn-135 provides a ligand contact to L-citrulline. Position 136 (Asp-136) interacts with ATP. Residues Arg-139 and Ser-192 each contribute to the L-citrulline site. ATP is bound at residue Asp-194. Positions 201, 203, and 280 each coordinate L-citrulline.

It belongs to the argininosuccinate synthase family. Type 2 subfamily. Homotetramer.

It is found in the cytoplasm. It carries out the reaction L-citrulline + L-aspartate + ATP = 2-(N(omega)-L-arginino)succinate + AMP + diphosphate + H(+). Its pathway is amino-acid biosynthesis; L-arginine biosynthesis; L-arginine from L-ornithine and carbamoyl phosphate: step 2/3. This is Argininosuccinate synthase from Escherichia coli O8 (strain IAI1).